The chain runs to 258 residues: Type II restriction enzyme HindII (258 aa).

The enzyme catalyses Endonucleolytic cleavage of DNA to give specific double-stranded fragments with terminal 5'-phosphates.. Its function is as follows. A P subtype restriction enzyme that recognizes the double-stranded sequence 5'-GTYRAC-3' and cleaves after Y-3. In Haemophilus influenzae (strain ATCC 51907 / DSM 11121 / KW20 / Rd), this protein is Type II restriction enzyme HindII (hindIIR).